Consider the following 63-residue polypeptide: UPF0434 protein BAV2101 (63 aa).

It belongs to the UPF0434 family.

In Bordetella avium (strain 197N), this protein is UPF0434 protein BAV2101.